Consider the following 270-residue polypeptide: Phospholysine phosphohistidine inorganic pyrophosphate phosphatase (270 aa).

Positions 19 and 21 each coordinate Mg(2+). Substrate-binding positions include 19–21 (DMC), 56–57 (TN), and Lys-191. Residue Asp-216 participates in Mg(2+) binding.

This sequence belongs to the HAD-like hydrolase superfamily. Mg(2+) is required as a cofactor.

The protein localises to the cytoplasm. The protein resides in the nucleus. It carries out the reaction diphosphate + H2O = 2 phosphate + H(+). Its function is as follows. Phosphatase that hydrolyzes imidodiphosphate, 3-phosphohistidine and 6-phospholysine. Has broad substrate specificity and can also hydrolyze inorganic diphosphate, but with lower efficiency. This chain is Phospholysine phosphohistidine inorganic pyrophosphate phosphatase (lhpp), found in Danio rerio (Zebrafish).